Reading from the N-terminus, the 289-residue chain is Acetyl-coenzyme A carboxylase carboxyl transferase subunit beta (289 aa).

The CoA carboxyltransferase N-terminal domain occupies 24–289 (LWTNCESCGQ…RQKTVSDAAA (266 aa)). 4 residues coordinate Zn(2+): Cys28, Cys31, Cys47, and Cys50. The C4-type zinc finger occupies 28–50 (CESCGQMMLTKELERSEKVCPHC).

This sequence belongs to the AccD/PCCB family. As to quaternary structure, acetyl-CoA carboxylase is a heterohexamer composed of biotin carboxyl carrier protein (AccB), biotin carboxylase (AccC) and two subunits each of ACCase subunit alpha (AccA) and ACCase subunit beta (AccD). The cofactor is Zn(2+).

The protein localises to the cytoplasm. It carries out the reaction N(6)-carboxybiotinyl-L-lysyl-[protein] + acetyl-CoA = N(6)-biotinyl-L-lysyl-[protein] + malonyl-CoA. It participates in lipid metabolism; malonyl-CoA biosynthesis; malonyl-CoA from acetyl-CoA: step 1/1. Its function is as follows. Component of the acetyl coenzyme A carboxylase (ACC) complex. Biotin carboxylase (BC) catalyzes the carboxylation of biotin on its carrier protein (BCCP) and then the CO(2) group is transferred by the transcarboxylase to acetyl-CoA to form malonyl-CoA. This is Acetyl-coenzyme A carboxylase carboxyl transferase subunit beta from Gluconobacter oxydans (strain 621H) (Gluconobacter suboxydans).